We begin with the raw amino-acid sequence, 228 residues long: ATP-dependent dethiobiotin synthetase BioD (228 aa).

13 to 18 contacts ATP; it reads DIGKTF. T17 provides a ligand contact to Mg(2+). The active site involves K38. S42 serves as a coordination point for substrate. Residues D55, 116 to 119, 179 to 180, and 208 to 210 each bind ATP; these read EGSG, NK, and PKI. D55 and E116 together coordinate Mg(2+).

The protein belongs to the dethiobiotin synthetase family. In terms of assembly, homodimer. Mg(2+) serves as cofactor.

The protein localises to the cytoplasm. The catalysed reaction is (7R,8S)-7,8-diammoniononanoate + CO2 + ATP = (4R,5S)-dethiobiotin + ADP + phosphate + 3 H(+). The protein operates within cofactor biosynthesis; biotin biosynthesis; biotin from 7,8-diaminononanoate: step 1/2. In terms of biological role, catalyzes a mechanistically unusual reaction, the ATP-dependent insertion of CO2 between the N7 and N8 nitrogen atoms of 7,8-diaminopelargonic acid (DAPA, also called 7,8-diammoniononanoate) to form a ureido ring. The sequence is that of ATP-dependent dethiobiotin synthetase BioD from Clostridium perfringens (strain 13 / Type A).